Consider the following 118-residue polypeptide: DNA-binding protein MmarC5_1518 (118 aa).

The span at 1 to 12 (MNPEEIRQRRLQ) shows a compositional bias: basic and acidic residues. The interval 1–35 (MNPEEIRQRRLQEMQAKAQEQGAEDPEAQRQAQEQ) is disordered.

Belongs to the PDCD5 family.

This chain is DNA-binding protein MmarC5_1518, found in Methanococcus maripaludis (strain C5 / ATCC BAA-1333).